A 248-amino-acid chain; its full sequence is 2,3-bisphosphoglycerate-dependent phosphoglycerate mutase (248 aa).

Substrate contacts are provided by residues 9-16, 22-23, R61, 88-91, K99, 115-116, and 183-184; these read RHGHSEWN, TG, ERHY, RR, and GN. Catalysis depends on H10, which acts as the Tele-phosphohistidine intermediate. The Proton donor/acceptor role is filled by E88.

Belongs to the phosphoglycerate mutase family. BPG-dependent PGAM subfamily.

The catalysed reaction is (2R)-2-phosphoglycerate = (2R)-3-phosphoglycerate. The protein operates within carbohydrate degradation; glycolysis; pyruvate from D-glyceraldehyde 3-phosphate: step 3/5. In terms of biological role, catalyzes the interconversion of 2-phosphoglycerate and 3-phosphoglycerate. In Arthrobacter sp. (strain FB24), this protein is 2,3-bisphosphoglycerate-dependent phosphoglycerate mutase.